The following is a 157-amino-acid chain: Cytochrome c-type biogenesis protein CcmE (157 aa).

Residues 1–7 (MTPRQRR) are Cytoplasmic-facing. Residues 8–28 (LGLLAAALACCGVAAALVLNA) traverse the membrane as a helical; Signal-anchor for type II membrane protein segment. Over 29-157 (FRANLVFFFS…GAMAAQELRR (129 aa)) the chain is Periplasmic. 2 residues coordinate heme: H123 and Y127.

It belongs to the CcmE/CycJ family.

It localises to the cell inner membrane. Heme chaperone required for the biogenesis of c-type cytochromes. Transiently binds heme delivered by CcmC and transfers the heme to apo-cytochromes in a process facilitated by CcmF and CcmH. The protein is Cytochrome c-type biogenesis protein CcmE of Cupriavidus taiwanensis (strain DSM 17343 / BCRC 17206 / CCUG 44338 / CIP 107171 / LMG 19424 / R1) (Ralstonia taiwanensis (strain LMG 19424)).